A 354-amino-acid polypeptide reads, in one-letter code: Phospho-N-acetylmuramoyl-pentapeptide-transferase (354 aa).

10 helical membrane-spanning segments follow: residues 23-43 (FSFFIAFCLTVYLMPKFIAWA), 66-86 (TPTMGGLVFIGAAVFATLLCA), 88-108 (LDNVFVVASLLCLVGFSALGF), 130-150 (LAVQVLIGLVVSSLLYFHGEL), 161-181 (FALLDLGVFAIVFWTIVIVAA), 193-213 (GLASVPAIFSLLTLGVFAYIC), 230-250 (VGETVIIAAALIGSLMGFLWF), 257-277 (VFMGDSGSLSVGAYIGLMGVM), 282-302 (ILLIIIGFVFVMETLSVILQV), and 331-351 (KIIVRFWLIAILANLIALTAL).

The protein belongs to the glycosyltransferase 4 family. MraY subfamily. It depends on Mg(2+) as a cofactor.

The protein resides in the cell inner membrane. The catalysed reaction is UDP-N-acetyl-alpha-D-muramoyl-L-alanyl-gamma-D-glutamyl-meso-2,6-diaminopimeloyl-D-alanyl-D-alanine + di-trans,octa-cis-undecaprenyl phosphate = di-trans,octa-cis-undecaprenyl diphospho-N-acetyl-alpha-D-muramoyl-L-alanyl-D-glutamyl-meso-2,6-diaminopimeloyl-D-alanyl-D-alanine + UMP. It participates in cell wall biogenesis; peptidoglycan biosynthesis. Catalyzes the initial step of the lipid cycle reactions in the biosynthesis of the cell wall peptidoglycan: transfers peptidoglycan precursor phospho-MurNAc-pentapeptide from UDP-MurNAc-pentapeptide onto the lipid carrier undecaprenyl phosphate, yielding undecaprenyl-pyrophosphoryl-MurNAc-pentapeptide, known as lipid I. In Campylobacter curvus (strain 525.92), this protein is Phospho-N-acetylmuramoyl-pentapeptide-transferase.